Consider the following 372-residue polypeptide: CXADR-like membrane protein (372 aa).

A signal peptide spans 1 to 17 (MSLFFLWLVTYYVGTLG). 2 Ig-like C2-type domains span residues 18 to 126 (THTE…VILK) and 134 to 223 (PKCE…VRVT). Residues 18 to 234 (THTEIKRVAE…QYVQSIGMVA (217 aa)) lie on the Extracellular side of the membrane. Cystine bridges form between Cys34/Cys110 and Cys152/Cys207. N-linked (GlcNAc...) asparagine glycosylation is found at Asn73 and Asn196. The helical transmembrane segment at 235-255 (GAVTGIVAGALLIFLLIWLLI) threads the bilayer. Over 256–372 (RRKSKERYEE…PSQSRAFQTV (117 aa)) the chain is Cytoplasmic. Residues 263–280 (YEEEDRPNEIREDAEAPR) are compositionally biased toward basic and acidic residues. Residues 263 to 372 (YEEEDRPNEI…PSQSRAFQTV (110 aa)) form a disordered region. Composition is skewed to low complexity over residues 287–313 (SSSS…ASRS) and 352–361 (LTKAETTLST). Polar residues predominate over residues 362–372 (MPSQSRAFQTV).

As to expression, predominantly expressed in the white adipose tissue.

The protein localises to the cell junction. Its subcellular location is the tight junction. It localises to the cell membrane. In terms of biological role, may be involved in the cell-cell adhesion. May play a role in adipocyte differentiation and development of obesity. Is required for normal small intestine development. This Rattus norvegicus (Rat) protein is CXADR-like membrane protein (Clmp).